Reading from the N-terminus, the 181-residue chain is Small ribosomal subunit protein uS4 (181 aa).

An S4 RNA-binding domain is found at 108 to 172; sequence RRLQTQVYRR…SPLVSDIHSE (65 aa).

This sequence belongs to the universal ribosomal protein uS4 family. As to quaternary structure, part of the 30S ribosomal subunit. Contacts protein S5. The interaction surface between S4 and S5 is involved in control of translational fidelity.

In terms of biological role, one of the primary rRNA binding proteins, it binds directly to 16S rRNA where it nucleates assembly of the body of the 30S subunit. Functionally, with S5 and S12 plays an important role in translational accuracy. The protein is Small ribosomal subunit protein uS4 of Methanospirillum hungatei JF-1 (strain ATCC 27890 / DSM 864 / NBRC 100397 / JF-1).